The sequence spans 42 residues: Photosystem II reaction center protein J (42 aa).

A helical transmembrane segment spans residues 10–30 (IPLWLVGTVAGILVLGLVGLF).

The protein belongs to the PsbJ family. PSII is composed of 1 copy each of membrane proteins PsbA, PsbB, PsbC, PsbD, PsbE, PsbF, PsbH, PsbI, PsbJ, PsbK, PsbL, PsbM, PsbT, PsbX, PsbY, PsbZ, Psb30/Ycf12, at least 3 peripheral proteins of the oxygen-evolving complex and a large number of cofactors. It forms dimeric complexes.

The protein resides in the plastid. Its subcellular location is the chloroplast thylakoid membrane. Its function is as follows. One of the components of the core complex of photosystem II (PSII). PSII is a light-driven water:plastoquinone oxidoreductase that uses light energy to abstract electrons from H(2)O, generating O(2) and a proton gradient subsequently used for ATP formation. It consists of a core antenna complex that captures photons, and an electron transfer chain that converts photonic excitation into a charge separation. In Staurastrum punctulatum (Green alga), this protein is Photosystem II reaction center protein J.